Reading from the N-terminus, the 417-residue chain is 3-ketoacyl-CoA thiolase, peroxisomal (417 aa).

The N-terminal 15 residues, 1–15, are a transit peptide targeting the peroxisome; the sequence is MSQRLQSIKDHLVES. The interval 1–15 is PTS2-type peroxisomal targeting signal; it reads MSQRLQSIKDHLVES. The active-site Acyl-thioester intermediate is cysteine 125. Active-site proton acceptor residues include histidine 375 and cysteine 403.

The protein belongs to the thiolase-like superfamily. Thiolase family. Homodimer. Interacts (via PTS2-type peroxisomal targeting signal region) with PEX7; leading to its translocation into peroxisomes.

It is found in the peroxisome. The protein resides in the mitochondrion intermembrane space. It carries out the reaction an acyl-CoA + acetyl-CoA = a 3-oxoacyl-CoA + CoA. Its pathway is lipid metabolism; fatty acid metabolism. In terms of biological role, responsible for the thiolytic cleavage of straight chain 3-keto fatty acyl-CoAs (3-oxoacyl-CoAs). The chain is 3-ketoacyl-CoA thiolase, peroxisomal (POT1) from Saccharomyces cerevisiae (strain ATCC 204508 / S288c) (Baker's yeast).